The following is a 240-amino-acid chain: Eukaryotic translation initiation factor 3 subunit K (240 aa).

A PCI domain is found at 41–221; the sequence is YDKDIVLTIL…TIKTRNIDEK (181 aa).

Belongs to the eIF-3 subunit K family. Component of the eukaryotic translation initiation factor 3 (eIF-3) complex.

It is found in the cytoplasm. Its function is as follows. Component of the eukaryotic translation initiation factor 3 (eIF-3) complex, which is involved in protein synthesis of a specialized repertoire of mRNAs and, together with other initiation factors, stimulates binding of mRNA and methionyl-tRNAi to the 40S ribosome. The eIF-3 complex specifically targets and initiates translation of a subset of mRNAs involved in cell proliferation. This chain is Eukaryotic translation initiation factor 3 subunit K, found in Caenorhabditis briggsae.